Consider the following 229-residue polypeptide: Thiamine-phosphate synthase (229 aa).

4-amino-2-methyl-5-(diphosphooxymethyl)pyrimidine contacts are provided by residues 38–42 (QFREK) and Asn73. Residues Asp74 and Asp93 each contribute to the Mg(2+) site. Ser111 serves as a coordination point for 4-amino-2-methyl-5-(diphosphooxymethyl)pyrimidine. 137 to 139 (TLS) is a 2-[(2R,5Z)-2-carboxy-4-methylthiazol-5(2H)-ylidene]ethyl phosphate binding site. Lys140 provides a ligand contact to 4-amino-2-methyl-5-(diphosphooxymethyl)pyrimidine. Residues Gly169 and 189 to 190 (IS) contribute to the 2-[(2R,5Z)-2-carboxy-4-methylthiazol-5(2H)-ylidene]ethyl phosphate site.

The protein belongs to the thiamine-phosphate synthase family. It depends on Mg(2+) as a cofactor.

It carries out the reaction 2-[(2R,5Z)-2-carboxy-4-methylthiazol-5(2H)-ylidene]ethyl phosphate + 4-amino-2-methyl-5-(diphosphooxymethyl)pyrimidine + 2 H(+) = thiamine phosphate + CO2 + diphosphate. It catalyses the reaction 2-(2-carboxy-4-methylthiazol-5-yl)ethyl phosphate + 4-amino-2-methyl-5-(diphosphooxymethyl)pyrimidine + 2 H(+) = thiamine phosphate + CO2 + diphosphate. The catalysed reaction is 4-methyl-5-(2-phosphooxyethyl)-thiazole + 4-amino-2-methyl-5-(diphosphooxymethyl)pyrimidine + H(+) = thiamine phosphate + diphosphate. Its pathway is cofactor biosynthesis; thiamine diphosphate biosynthesis; thiamine phosphate from 4-amino-2-methyl-5-diphosphomethylpyrimidine and 4-methyl-5-(2-phosphoethyl)-thiazole: step 1/1. Functionally, condenses 4-methyl-5-(beta-hydroxyethyl)thiazole monophosphate (THZ-P) and 2-methyl-4-amino-5-hydroxymethyl pyrimidine pyrophosphate (HMP-PP) to form thiamine monophosphate (TMP). The polypeptide is Thiamine-phosphate synthase (Streptococcus suis (strain 98HAH33)).